A 152-amino-acid polypeptide reads, in one-letter code: Syntaxin-8A (152 aa).

The span at 1-14 (MNNNNNFNSNFNSN) shows a compositional bias: low complexity. The interval 1-22 (MNNNNNFNSNFNSNRISSTQPY) is disordered. Residues 1-131 (MNNNNNFNSN…LTQQSKTTGY (131 aa)) lie on the Cytoplasmic side of the membrane. Positions 60–122 (KRDMEEQDKM…RNTTKNLITL (63 aa)) constitute a t-SNARE coiled-coil homology domain. A helical; Anchor for type IV membrane protein membrane pass occupies residues 132 to 152 (CSAICFLLLVLLVIIILASVL).

This sequence belongs to the syntaxin family. As to quaternary structure, component of the SNARE complex composed of syn7A, syn8A, vamp7A and vti1A.

Its subcellular location is the endosome membrane. Its function is as follows. Involved in the targeting and/or fusion of transport vesicles to their target membrane during transport of proteins from the early endosome to the lysosome. Required for fusion of late endosomes with lysosomes and homotypic lysosomal fusion. This chain is Syntaxin-8A, found in Dictyostelium discoideum (Social amoeba).